A 687-amino-acid chain; its full sequence is SLCO1B3-SLCO1B7 readthrough transcript protein (687 aa).

Residues 1–29 lie on the Cytoplasmic side of the membrane; the sequence is MDQHQHLNKTAESASSEKKKTRRCNGFKM. Residues 30–50 form a helical membrane-spanning segment; it reads FLAALSFSYIAKALGGIIMKI. The Extracellular portion of the chain corresponds to 51–63; sequence SITQIERRFDISS. Residues 64-84 form a helical membrane-spanning segment; that stretch reads SLAGLIDGSFEIGNLLVIVFV. The Cytoplasmic segment spans residues 85 to 96; that stretch reads SYFGSKLHRPKL. A helical membrane pass occupies residues 97-117; that stretch reads IGIGCLLMGTGSILTSLPHFF. The Extracellular segment spans residues 118 to 170; sequence MGYYRYSKETNIDPSENSTSNLPNCLINQMLSLNRTPSEIIERGCVKESGSHM. Asn134 and Asn151 each carry an N-linked (GlcNAc...) asparagine glycan. Residues 171 to 191 traverse the membrane as a helical segment; it reads WIYVFMGNMLRGIGETPIVPL. The Cytoplasmic segment spans residues 192–206; that stretch reads GISYIDDFAKEGHSS. The chain crosses the membrane as a helical span at residues 207-227; sequence LYLGTVNVMGMTGLVFAFMLG. Residues 228 to 258 lie on the Extracellular side of the membrane; that stretch reads SLFAKMYVDIGYVDLSTIRITPKDSRWVGAW. Residues 259–279 form a helical membrane-spanning segment; sequence WLGFLVSGIVSIISSIPFFFL. Over 280-339 the chain is Cytoplasmic; sequence PLNPNKPQKERKVSLFLHVLKTNDKRNQIANLTNRRKYITKNVTGFFQSLKSILTNPLYV. The helical transmembrane segment at 340–360 threads the bilayer; that stretch reads IFVIFTLLHMSSYIASLTYII. At 361-376 the chain is on the extracellular side; sequence KMVEQQYGWSASKTNF. The chain crosses the membrane as a helical span at residues 377–397; it reads LLGVLALPAVAIGMFSGGYII. Residues 398 to 409 lie on the Cytoplasmic side of the membrane; the sequence is KKFKLSLVGLAK. The chain crosses the membrane as a helical span at residues 410 to 430; the sequence is LAFCSATVHLLSQVLYFFLIC. The Extracellular segment spans residues 431–539; that stretch reads ESKSVAGLTL…CTRKSYVYFV (109 aa). Residues 453–508 form the Kazal-like domain; it reads DVPLSYCNSECNCDESQWEPVCGNNGITYLSPCLAGCKSSSGNKEPIVFYNCSCVE. Disulfide bonds link Cys459/Cys489, Cys465/Cys485, and Cys474/Cys506. 2 N-linked (GlcNAc...) asparagine glycosylation sites follow: Asn503 and Asn516. The chain crosses the membrane as a helical span at residues 540 to 560; sequence IQVLDAFLCAVGLTSYSVLVI. Over 561 to 568 the chain is Cytoplasmic; that stretch reads RIVQPELK. The helical transmembrane segment at 569–589 threads the bilayer; sequence ALAIGFHSMIMRSLGGILVPI. At 590–624 the chain is on the extracellular side; that stretch reads YFGALIDTTCMKWSTNSCGARGACRIYNSTYLGRA. The N-linked (GlcNAc...) asparagine glycan is linked to Asn617. A helical membrane pass occupies residues 625–645; the sequence is FFGLKVALIFPVLVLLTVFIF. Residues 646–687 are Cytoplasmic-facing; that stretch reads VVRKKSHGKDTKVLENERQVMDEANLEFLNDSEHFVPSAEEQ.

The protein belongs to the organo anion transporter (TC 2.A.60) family. In terms of tissue distribution, expressed in the perivenular areas (centrilobular) of the liver (at protein level).

Its subcellular location is the smooth endoplasmic reticulum membrane. It localises to the cell membrane. The protein localises to the endoplasmic reticulum membrane. It carries out the reaction 17beta-estradiol 17-O-(beta-D-glucuronate)(out) = 17beta-estradiol 17-O-(beta-D-glucuronate)(in). It catalyses the reaction dehydroepiandrosterone 3-sulfate(out) = dehydroepiandrosterone 3-sulfate(in). The catalysed reaction is taurocholate(out) = taurocholate(in). The enzyme catalyses lithocholate(out) = lithocholate(in). Its activity is regulated as follows. Transport activity is induced by farnesoid X receptor (FXR) agonists such as chenodeoxycholate. Functionally, mediates the Na(+)-independent uptake of organic anions. Transports the conjugated steroids 17-beta-glucuronosyl estradiol (17beta-estradiol 17-O-(beta-D-glucuronate) or E2G) and dehydroepiandrosterone 3-sulfate (DHEAS) at the smooth endoplasmic reticulum membrane (SER), granting access to metabolizing enzymes. Contributes to the metabolism of bile acids such as taurocholate (cholyltaurine) and lithocholate, by functioning as a doorway between SER and cytosol, thereby decreasing their circulating levels and protecting the organism from their detergent properties. Regulates access or exit of drugs to the SER lumen. This is SLCO1B3-SLCO1B7 readthrough transcript protein from Homo sapiens (Human).